The chain runs to 123 residues: MEAVIREGGSLPQVRSASRNQQRSGESTKGRKWEKQLRSEMRRWRRRKWPHLKPLAHPAISAEQLLAVIAPQPRPLLLLMWGVVCILPWRGWESSRARGVTHLGGRNSQGRSQGTRVWPLGRP.

Disordered stretches follow at residues 1-38 (MEAVIREGGSLPQVRSASRNQQRSGESTKGRKWEKQLR) and 100-123 (VTHLGGRNSQGRSQGTRVWPLGRP). Over residues 13 to 25 (QVRSASRNQQRSG) the composition is skewed to polar residues. The segment covering 26–38 (ESTKGRKWEKQLR) has biased composition (basic and acidic residues). The segment covering 106–115 (RNSQGRSQGT) has biased composition (polar residues).

The protein is Putative trans-acting factor (trans-acting factor) of Avian leukosis virus subgroup A (isolate RSA) (ALV-A RSA).